We begin with the raw amino-acid sequence, 460 residues long: MATGKIVQVIGAVVDVEFPQDAVPRVYDALEVQNGNEKLVLEVQQQLGGGIVRTIAMGSSDGLRRGLDVKDLEHPIEVPVGKATLGRIMNVLGEPVDMKGEIGEEERWAIHRAAPSYEELSNSQELLETGIKVIDLMCPFAKGGKVGLFGGAGVGKTVNMMELIRNIAIEHSGYSVFAGVGERTREGNDFYHEMTDSNVIDKVSLVYGQMNEPPGNRLRVALTGLTMAEKFRDEGRDVLLFVDNIYRYTLAGTEVSALLGRMPSAVGYQPTLAEEMGVLQERITSTKTGSITSVQAVYVPADDLTDPSPATTFAHLDATVVLSRQIASLGIYPAVDPLDSTSRQLDPLVVGQEHYDTARGVQSILQRYQELKDIIAILGMDELSEEDKLVVARARKIQRFLSQPFFVAEVFTGSPGKYVSLKDTIRGFKGIMEGEYDHLPEQAFYMVGSIDEAVEKAKKL.

Gly-150–Thr-157 lines the ATP pocket.

Belongs to the ATPase alpha/beta chains family. F-type ATPases have 2 components, CF(1) - the catalytic core - and CF(0) - the membrane proton channel. CF(1) has five subunits: alpha(3), beta(3), gamma(1), delta(1), epsilon(1). CF(0) has three main subunits: a(1), b(2) and c(9-12). The alpha and beta chains form an alternating ring which encloses part of the gamma chain. CF(1) is attached to CF(0) by a central stalk formed by the gamma and epsilon chains, while a peripheral stalk is formed by the delta and b chains.

It is found in the cell inner membrane. The enzyme catalyses ATP + H2O + 4 H(+)(in) = ADP + phosphate + 5 H(+)(out). In terms of biological role, produces ATP from ADP in the presence of a proton gradient across the membrane. The catalytic sites are hosted primarily by the beta subunits. This Salmonella agona (strain SL483) protein is ATP synthase subunit beta.